We begin with the raw amino-acid sequence, 251 residues long: Protein TK1472 (251 aa).

This sequence belongs to the CinA family.

This chain is Protein TK1472, found in Thermococcus kodakarensis (strain ATCC BAA-918 / JCM 12380 / KOD1) (Pyrococcus kodakaraensis (strain KOD1)).